A 599-amino-acid polypeptide reads, in one-letter code: DNA primase (599 aa).

A CHC2-type zinc finger spans residues 38-62; that stretch reads CPFHDEKTPSFTVSEDKQICHCFGC. The Toprim domain maps to 260-341; the sequence is DEIVLLEGFM…NVFVIQLPSG (82 aa). The Mg(2+) site is built by glutamate 266, aspartate 310, and aspartate 312.

It belongs to the DnaG primase family. Monomer. Interacts with DnaB. It depends on Zn(2+) as a cofactor. Mg(2+) serves as cofactor.

It catalyses the reaction ssDNA + n NTP = ssDNA/pppN(pN)n-1 hybrid + (n-1) diphosphate.. In terms of biological role, RNA polymerase that catalyzes the synthesis of short RNA molecules used as primers for DNA polymerase during DNA replication. In Staphylococcus aureus (strain MRSA252), this protein is DNA primase.